Here is a 104-residue protein sequence, read N- to C-terminus: Inclusion membrane protein F (104 aa).

2 helical membrane passes run 39 to 59 (LVVA…SLVA) and 70 to 90 (LAVL…VLFI).

The protein resides in the secreted. Its subcellular location is the host vacuole. It localises to the host pathogen-containing vacuole. The protein localises to the host pathogen-containing vacuole membrane. Inclusion membrane protein probably involved in early modification events of the chlamydial inclusion. The chain is Inclusion membrane protein F from Chlamydia trachomatis serovar L2 (strain ATCC VR-902B / DSM 19102 / 434/Bu).